A 1388-amino-acid chain; its full sequence is Rho-associated protein kinase 2 (1388 aa).

The segment at 1–24 is disordered; it reads MSRPPPTGKMPGAPEAVSGDGAGA. One can recognise a Protein kinase domain in the interval 92 to 354; it reads YDVVKVIGRG…VEEIKQHPFF (263 aa). Residues 98–106 and Lys121 contribute to the ATP site; that span reads IGRGAFGEV. The Proton acceptor role is filled by Asp214. An AGC-kinase C-terminal domain is found at 357 to 425; sequence DQWNWDNIRE…YRENLLLSDS (69 aa). The interaction with PPP1R12A stretch occupies residues 363-784; sequence NIRETAAPVV…INELLKQKDV (422 aa). Residues 373-420 form an interaction with NPM1 region; that stretch reads PELSSDIDSSNFDDIEDDKGDVETFPIPKAFVGNQLPFIGFTYYRENL. Phosphothreonine; by ROCK2 is present on Thr414. An REM-1 domain is found at 497–573; that stretch reads ALRQLEREKA…LDETNALLRT (77 aa). Over residues 512–530 the composition is skewed to basic and acidic residues; that stretch reads NAEYQRKADHEADKKRNLE. Residues 512–532 are disordered; it reads NAEYQRKADHEADKKRNLEND. The residue at position 722 (Tyr722) is a Phosphotyrosine; by SRC. One can recognise a RhoBD domain in the interval 979–1047; that stretch reads TSDVANLANE…LAEIMNRKEP (69 aa). Residues 979–1047 are RHOA binding; sequence TSDVANLANE…LAEIMNRKEP (69 aa). A coiled-coil region spans residues 1054-1126; sequence TDMRRKEKEN…EQLRSQLQAL (73 aa). Position 1137 is a phosphoserine (Ser1137). The PH domain maps to 1150–1349; sequence ESRLEGWLSL…WVSRLVKKIP (200 aa). The residue at position 1212 (Thr1212) is a Phosphothreonine. Residues 1260-1315 form a Phorbol-ester/DAG-type zinc finger; the sequence is GHEFIPTLYHFPTNCEACMKPLWHMFKPPPALECRRCHIKCHKDHMDKKEEIIAPC. A disordered region spans residues 1345-1388; that stretch reads VKKIPKKPPAPDPFARSSPRTSMKIQQNQSIRRPSRQLAANKPS. Phosphoserine occurs at positions 1362 and 1374. Over residues 1362 to 1376 the composition is skewed to polar residues; that stretch reads SPRTSMKIQQNQSIR.

The protein belongs to the protein kinase superfamily. AGC Ser/Thr protein kinase family. In terms of assembly, homodimer. Interacts with IRS1. Interacts with RAF1. Interacts with RHOA (activated by GTP), RHOB and RHOC. Interacts with PPP1R12A. Interacts with EP300. Interacts with CHORDC1. Interacts with BRCA2. Interacts with NPM1; this interaction enhances ROCK2 activity. Interacts with SORL1. Interacts with PJVK. Mg(2+) is required as a cofactor. In terms of processing, autophosphorylated. Phosphorylation at Tyr-722 reduces its binding to RHOA and is crucial for focal adhesion dynamics. Dephosphorylation by PTPN11 stimulates its RHOA binding activity. Cleaved by granzyme B during apoptosis. This leads to constitutive activation of the kinase and membrane blebbing.

The protein localises to the cytoplasm. It localises to the cell membrane. It is found in the nucleus. Its subcellular location is the cytoskeleton. The protein resides in the microtubule organizing center. The protein localises to the centrosome. The catalysed reaction is L-seryl-[protein] + ATP = O-phospho-L-seryl-[protein] + ADP + H(+). It carries out the reaction L-threonyl-[protein] + ATP = O-phospho-L-threonyl-[protein] + ADP + H(+). With respect to regulation, activated by RHOA binding. Inhibited by Y-27632. Protein kinase which is a key regulator of actin cytoskeleton and cell polarity. Involved in regulation of smooth muscle contraction, actin cytoskeleton organization, stress fiber and focal adhesion formation, neurite retraction, cell adhesion and motility via phosphorylation of ADD1, BRCA2, CNN1, EZR, DPYSL2, EP300, MSN, MYL9/MLC2, NPM1, RDX, PPP1R12A and VIM. Phosphorylates SORL1 and IRF4. Acts as a negative regulator of VEGF-induced angiogenic endothelial cell activation. Positively regulates the activation of p42/MAPK1-p44/MAPK3 and of p90RSK/RPS6KA1 during myogenic differentiation. Plays an important role in the timely initiation of centrosome duplication. Inhibits keratinocyte terminal differentiation. May regulate closure of the eyelids and ventral body wall through organization of actomyosin bundles. Plays a critical role in the regulation of spine and synaptic properties in the hippocampus. Plays an important role in generating the circadian rhythm of the aortic myofilament Ca(2+) sensitivity and vascular contractility by modulating the myosin light chain phosphorylation. This chain is Rho-associated protein kinase 2 (ROCK2), found in Sus scrofa (Pig).